Consider the following 355-residue polypeptide: Phosphatidylinositol:ceramide inositolphosphotransferase (355 aa).

Topologically, residues 1 to 44 (MISYPFFSLSPPGLVPPPMAVPPVEMYSGSFWNRMRKPLPLRTQ) are cytoplasmic. The chain crosses the membrane as a helical span at residues 45-65 (VIRFTVVFVIVSFILAVALQI). Topologically, residues 66–89 (THERMPDPKVTKPLPDLGFELLTK) are extracellular. The helical transmembrane segment at 90–110 (ISFLSVVTDVLIAFLSSLSFF) threads the bilayer. Residues 111-165 (TLWKLYLLHRHCVGSGEPELPCNIPGVSRFFLSVWLCKENCRIELRNVHTIAWIR) are Cytoplasmic-facing. The chain crosses the membrane as a helical span at residues 166-186 (FITSYALLLLFRSLVIVMTSM). Over 187-205 (PTPVDKCQNPPKIENPVKN) the chain is Extracellular. The chain crosses the membrane as a helical span at residues 206–226 (VILTVLTAGGGSIHCGDLMYS). Over 227 to 251 (GHTVILTLHLMFHWIYGAMVHWSFR) the chain is Cytoplasmic. Residues H228, H271, and D275 contribute to the active site. The chain crosses the membrane as a helical span at residues 252-272 (PVVTVVAIFGYYCIVASRSHY). Residues 273-275 (TDD) are Extracellular-facing. Residues 276 to 296 (VLVAIYLTIATFIAVGHNADG) form a helical membrane-spanning segment. Topologically, residues 297–355 (APWQLQLFIRWLPCCGANSREVTEDSQPVMVAFKSEAVDELRERDDSAGLSCEVSTNEV) are cytoplasmic.

Belongs to the sphingomyelin synthase family.

The protein localises to the membrane. Its function is as follows. Bidirectional lipid inositolphosphotransferase capable of converting phosphatidylinositol (PI) and ceramide to inositol-phosphorylceramide (IPC) and diacylglycerol (DAG) and vice versa. Direction is dependent on the relative concentrations of DAG and ceramide as phosphoinositol acceptors. Does not function strictly as a SM synthase. Essential for viability of the pathogenic bloodstream stage of this human protozoan parasite and, consequently, can be considered as potential drug target. The chain is Phosphatidylinositol:ceramide inositolphosphotransferase from Trypanosoma brucei brucei (strain 927/4 GUTat10.1).